Consider the following 150-residue polypeptide: Large ribosomal subunit protein bL9 (150 aa).

This sequence belongs to the bacterial ribosomal protein bL9 family.

Its function is as follows. Binds to the 23S rRNA. This chain is Large ribosomal subunit protein bL9, found in Shewanella baltica (strain OS223).